The primary structure comprises 239 residues: Putative GEM-like protein 3 (239 aa).

The interval 29–68 (HWNPELVSESPAPDEKALSSSSAARSNPYVARAPTETSDA) is disordered. In terms of domain architecture, GRAM spans 128–191 (KIFRQTFETV…HQLKSVNPSI (64 aa)).

Belongs to the GEM family.

The chain is Putative GEM-like protein 3 from Arabidopsis thaliana (Mouse-ear cress).